The chain runs to 203 residues: Small ribosomal subunit protein uS4c (203 aa).

In terms of domain architecture, S4 RNA-binding spans 89–152 (MRLDNILFRL…QSRTLIQNSL (64 aa)).

Belongs to the universal ribosomal protein uS4 family. As to quaternary structure, part of the 30S ribosomal subunit. Contacts protein S5. The interaction surface between S4 and S5 is involved in control of translational fidelity.

The protein localises to the plastid. Its function is as follows. One of the primary rRNA binding proteins, it binds directly to 16S rRNA where it nucleates assembly of the body of the 30S subunit. Functionally, with S5 and S12 plays an important role in translational accuracy. This chain is Small ribosomal subunit protein uS4c (rps4), found in Orobanche minor (Small broomrape).